Consider the following 107-residue polypeptide: EMBRYO SURROUNDING FACTOR 1-like protein 5 (107 aa).

Residues 1–22 (MSLLRFAILCIIFVSLFGVHEC) form the signal peptide. Intrachain disulfides connect Cys35–Cys49, Cys40–Cys69, Cys47–Cys65, and Cys50–Cys58. The chain crosses the membrane as a helical span at residues 87–107 (GLGPPIYLFFLGQFIYFVLGL).

It belongs to the MEG family. Expressed in flowers.

The protein resides in the membrane. This chain is EMBRYO SURROUNDING FACTOR 1-like protein 5 (ESFL5), found in Arabidopsis thaliana (Mouse-ear cress).